We begin with the raw amino-acid sequence, 262 residues long: Troponin T, slow skeletal muscle (262 aa).

The segment covering 1–31 (MSDTEEQEYEEEQAEDEEAVEEEEAPEEPEP) has biased composition (acidic residues). 2 disordered regions span residues 1–62 (MSDT…ERVD) and 109–153 (ERAE…KKKV). Residue Ser2 is modified to Phosphoserine; by CK2. Positions 32 to 41 (VAEREEERPK) are enriched in basic and acidic residues. Over residues 43–55 (SRPVVPPLIPPKI) the composition is skewed to pro residues. The segment covering 109 to 149 (ERAEQQRFRTEKERERQAKLAEEKMRKEEEEAKKRAEDDAK) has biased composition (basic and acidic residues).

The protein belongs to the troponin T family. As to quaternary structure, interacts with TPM3. As to expression, expressed in adult soleus muscle.

Its function is as follows. Troponin T is the tropomyosin-binding subunit of troponin, the thin filament regulatory complex which confers calcium-sensitivity to striated muscle actomyosin ATPase activity. The sequence is that of Troponin T, slow skeletal muscle (Tnnt1) from Mus musculus (Mouse).